Reading from the N-terminus, the 162-residue chain is Shikimate kinase (162 aa).

ATP is bound at residue glycine 11–serine 16. Residue serine 15 participates in Mg(2+) binding. Positions 33, 57, and 80 each coordinate substrate. Position 116 (arginine 116) interacts with ATP. Substrate is bound at residue arginine 132.

This sequence belongs to the shikimate kinase family. As to quaternary structure, monomer. The cofactor is Mg(2+).

It is found in the cytoplasm. It carries out the reaction shikimate + ATP = 3-phosphoshikimate + ADP + H(+). Its pathway is metabolic intermediate biosynthesis; chorismate biosynthesis; chorismate from D-erythrose 4-phosphate and phosphoenolpyruvate: step 5/7. In terms of biological role, catalyzes the specific phosphorylation of the 3-hydroxyl group of shikimic acid using ATP as a cosubstrate. This chain is Shikimate kinase, found in Helicobacter pylori (strain HPAG1).